The primary structure comprises 203 residues: ATP synthase subunit b (203 aa).

The chain crosses the membrane as a helical span at residues phenylalanine 14–serine 34.

This sequence belongs to the ATPase B chain family. As to quaternary structure, F-type ATPases have 2 components, F(1) - the catalytic core - and F(0) - the membrane proton channel. F(1) has five subunits: alpha(3), beta(3), gamma(1), delta(1), epsilon(1). F(0) has three main subunits: a(1), b(2) and c(10-14). The alpha and beta chains form an alternating ring which encloses part of the gamma chain. F(1) is attached to F(0) by a central stalk formed by the gamma and epsilon chains, while a peripheral stalk is formed by the delta and b chains.

The protein resides in the cell inner membrane. Its function is as follows. F(1)F(0) ATP synthase produces ATP from ADP in the presence of a proton or sodium gradient. F-type ATPases consist of two structural domains, F(1) containing the extramembraneous catalytic core and F(0) containing the membrane proton channel, linked together by a central stalk and a peripheral stalk. During catalysis, ATP synthesis in the catalytic domain of F(1) is coupled via a rotary mechanism of the central stalk subunits to proton translocation. Component of the F(0) channel, it forms part of the peripheral stalk, linking F(1) to F(0). The sequence is that of ATP synthase subunit b from Syntrophobacter fumaroxidans (strain DSM 10017 / MPOB).